The sequence spans 267 residues: Cell division protein FtsQ (267 aa).

Topologically, residues 1–32 are cytoplasmic; that stretch reads MRKKTSSNKKKQTKKTNNISLRRKLGLMYKKA. Residues 33–53 form a helical membrane-spanning segment; that stretch reads ILGLKIALIIFVCLFVFTKYF. Residues 54-267 are Periplasmic-facing; that stretch reads AGIKTYLTTN…DKNKYYIEKY (214 aa). Positions 73-141 constitute a POTRA domain; it reads FKLENVIIEG…NTVYIKLFER (69 aa).

The protein belongs to the FtsQ/DivIB family. FtsQ subfamily.

The protein resides in the cell inner membrane. In terms of biological role, essential cell division protein. This chain is Cell division protein FtsQ, found in Rickettsia conorii (strain ATCC VR-613 / Malish 7).